We begin with the raw amino-acid sequence, 288 residues long: Bifunctional protein FolD (288 aa).

NADP(+) contacts are provided by residues 166 to 168 (GAS) and Ile-232.

This sequence belongs to the tetrahydrofolate dehydrogenase/cyclohydrolase family. In terms of assembly, homodimer.

It catalyses the reaction (6R)-5,10-methylene-5,6,7,8-tetrahydrofolate + NADP(+) = (6R)-5,10-methenyltetrahydrofolate + NADPH. The enzyme catalyses (6R)-5,10-methenyltetrahydrofolate + H2O = (6R)-10-formyltetrahydrofolate + H(+). It participates in one-carbon metabolism; tetrahydrofolate interconversion. Functionally, catalyzes the oxidation of 5,10-methylenetetrahydrofolate to 5,10-methenyltetrahydrofolate and then the hydrolysis of 5,10-methenyltetrahydrofolate to 10-formyltetrahydrofolate. The polypeptide is Bifunctional protein FolD (Escherichia coli O8 (strain IAI1)).